The chain runs to 332 residues: D-alanine--D-alanine ligase (332 aa).

Positions 1 to 17 are enriched in polar residues; it reads MPMTMTQSATNPTATPV. Residues 1 to 28 form a disordered region; the sequence is MPMTMTQSATNPTATPVSANKASANAAT. Residues 18–28 show a composition bias toward low complexity; it reads SANKASANAAT. In terms of domain architecture, ATP-grasp spans 132 to 329; sequence KQLWHGCGLS…FEQLCWHILA (198 aa). Residue 158–213 coordinates ATP; it reads VNTLGLPLIVKPVHEGSSIGMSKVNTLDELPKAYEVAAGCGDVVMAEKWITGREFT. 3 residues coordinate Mg(2+): Asp-283, Glu-296, and Asn-298.

The protein belongs to the D-alanine--D-alanine ligase family. It depends on Mg(2+) as a cofactor. Requires Mn(2+) as cofactor.

The protein resides in the cytoplasm. It catalyses the reaction 2 D-alanine + ATP = D-alanyl-D-alanine + ADP + phosphate + H(+). Its pathway is cell wall biogenesis; peptidoglycan biosynthesis. Cell wall formation. This chain is D-alanine--D-alanine ligase, found in Psychrobacter sp. (strain PRwf-1).